Consider the following 196-residue polypeptide: Ribonuclease HII (196 aa).

Residues Phe-15–Lys-196 form the RNase H type-2 domain. Residues Asp-21, Glu-22, and Asp-112 each coordinate a divalent metal cation.

It belongs to the RNase HII family. It depends on Mn(2+) as a cofactor. The cofactor is Mg(2+).

It localises to the cytoplasm. It catalyses the reaction Endonucleolytic cleavage to 5'-phosphomonoester.. In terms of biological role, endonuclease that specifically degrades the RNA of RNA-DNA hybrids. The chain is Ribonuclease HII from Rickettsia bellii (strain OSU 85-389).